Consider the following 155-residue polypeptide: SsrA-binding protein (155 aa).

It belongs to the SmpB family.

It is found in the cytoplasm. Functionally, required for rescue of stalled ribosomes mediated by trans-translation. Binds to transfer-messenger RNA (tmRNA), required for stable association of tmRNA with ribosomes. tmRNA and SmpB together mimic tRNA shape, replacing the anticodon stem-loop with SmpB. tmRNA is encoded by the ssrA gene; the 2 termini fold to resemble tRNA(Ala) and it encodes a 'tag peptide', a short internal open reading frame. During trans-translation Ala-aminoacylated tmRNA acts like a tRNA, entering the A-site of stalled ribosomes, displacing the stalled mRNA. The ribosome then switches to translate the ORF on the tmRNA; the nascent peptide is terminated with the 'tag peptide' encoded by the tmRNA and targeted for degradation. The ribosome is freed to recommence translation, which seems to be the essential function of trans-translation. In Streptococcus pyogenes serotype M4 (strain MGAS10750), this protein is SsrA-binding protein.